We begin with the raw amino-acid sequence, 313 residues long: tRNA-cytidine(32) 2-sulfurtransferase (313 aa).

The PP-loop motif signature appears at 54 to 59; sequence SGGKDS. [4Fe-4S] cluster is bound by residues Cys-129, Cys-132, and Cys-220.

It belongs to the TtcA family. In terms of assembly, homodimer. The cofactor is Mg(2+). Requires [4Fe-4S] cluster as cofactor.

It is found in the cytoplasm. The enzyme catalyses cytidine(32) in tRNA + S-sulfanyl-L-cysteinyl-[cysteine desulfurase] + AH2 + ATP = 2-thiocytidine(32) in tRNA + L-cysteinyl-[cysteine desulfurase] + A + AMP + diphosphate + H(+). It participates in tRNA modification. Its function is as follows. Catalyzes the ATP-dependent 2-thiolation of cytidine in position 32 of tRNA, to form 2-thiocytidine (s(2)C32). The sulfur atoms are provided by the cysteine/cysteine desulfurase (IscS) system. The protein is tRNA-cytidine(32) 2-sulfurtransferase of Methylibium petroleiphilum (strain ATCC BAA-1232 / LMG 22953 / PM1).